The chain runs to 1098 residues: Unconventional myosin-If (1098 aa).

In terms of domain architecture, Myosin motor spans 17 to 690; it reads SGVDDMVLLP…SLFLLEEVRE (674 aa). 110–117 serves as a coordination point for ATP; that stretch reads GESGAGKT. The tract at residues 579–589 is actin-binding; sequence PHYIRCIKPNE. The region spanning 693–722 is the IQ domain; the sequence is FDGFARTIQKAWRRHVAVRKYEEMREEASN. The region spanning 728–917 is the TH1 domain; it reads KERRRNSINR…GRTLTVSVGD (190 aa). 2 disordered regions span residues 913–1009 and 1021–1044; these read VSVG…EFLN and KRSV…THGP. The segment covering 924–937 has biased composition (basic residues); sequence KPTRKGMAKGKPRR. Ser-1023 is subject to Phosphoserine. In terms of domain architecture, SH3 spans 1041–1098; that stretch reads THGPRCRALYQYVGQDVDELSFNVNEVIEILMEDPSGWWKGRLHGQEGLFPGNYVEKI.

This sequence belongs to the TRAFAC class myosin-kinesin ATPase superfamily. Myosin family.

Functionally, myosins are actin-based motor molecules with ATPase activity. Unconventional myosins serve in intracellular movements. Their highly divergent tails are presumed to bind to membranous compartments, which would be moved relative to actin filaments. The protein is Unconventional myosin-If (MYO1F) of Homo sapiens (Human).